We begin with the raw amino-acid sequence, 896 residues long: Trehalose-phosphatase (896 aa).

The tract at residues 1–554 (MTTTAQDNSP…SNDDMERKMT (554 aa)) is glycosyltransferase.

In the N-terminal section; belongs to the glycosyltransferase 20 family. It in the C-terminal section; belongs to the trehalose phosphatase family. In terms of assembly, the trehalose synthase complex is composed of the two catalytic subunits TPS1 and TPS2, and at least one of the two regulatory subunits TPS3 or TSL1. Mg(2+) serves as cofactor.

The protein resides in the cytoplasm. It carries out the reaction alpha,alpha-trehalose 6-phosphate + H2O = alpha,alpha-trehalose + phosphate. The protein operates within carbohydrate biosynthesis. With respect to regulation, inhibited by EDTA. In terms of biological role, phosphatase catalytic subunit of the trehalose synthase complex that catalyzes the production of trehalose from glucose-6-phosphate and UDP-alpha-D-glucose in a two step process. The protein is Trehalose-phosphatase of Saccharomyces cerevisiae (strain ATCC 204508 / S288c) (Baker's yeast).